Consider the following 127-residue polypeptide: Apolipoprotein C-IV (127 aa).

The first 27 residues, 1–27, serve as a signal peptide directing secretion; that stretch reads MSLLRNRLQDLPALCLCVLVLACIGAC. N-linked (GlcNAc...) asparagine glycosylation occurs at asparagine 63.

The protein belongs to the apolipoprotein C4 family.

It is found in the secreted. Its function is as follows. May participate in lipoprotein metabolism. This chain is Apolipoprotein C-IV (APOC4), found in Colobus guereza (Mantled guereza).